A 164-amino-acid chain; its full sequence is Arginine repressor (164 aa).

The protein belongs to the ArgR family.

The protein localises to the cytoplasm. It functions in the pathway amino-acid biosynthesis; L-arginine biosynthesis [regulation]. In terms of biological role, regulates arginine biosynthesis genes. The polypeptide is Arginine repressor (Mycobacterium avium (strain 104)).